The chain runs to 160 residues: Cytochrome b6-f complex subunit 4 (160 aa).

A run of 3 helical transmembrane segments spans residues 36–56, 95–115, and 131–151; these read LLYV…GLAI, LLGV…PFIE, and TIFL…TMPI.

This sequence belongs to the cytochrome b family. PetD subfamily. As to quaternary structure, the 4 large subunits of the cytochrome b6-f complex are cytochrome b6, subunit IV (17 kDa polypeptide, petD), cytochrome f and the Rieske protein, while the 4 small subunits are petG, petL, petM and petN. The complex functions as a dimer.

The protein resides in the plastid. Its subcellular location is the chloroplast thylakoid membrane. In terms of biological role, component of the cytochrome b6-f complex, which mediates electron transfer between photosystem II (PSII) and photosystem I (PSI), cyclic electron flow around PSI, and state transitions. This chain is Cytochrome b6-f complex subunit 4, found in Porphyra purpurea (Red seaweed).